A 262-amino-acid polypeptide reads, in one-letter code: Phosphomannomutase 1 (262 aa).

The residue at position 2 (A2) is an N-acetylalanine. The active-site Nucleophile is the D19. 2 residues coordinate Mg(2+): D19 and D21. Catalysis depends on D21, which acts as the Proton donor/acceptor. Positions 28, 132, 143, 150, 186, 188, and 190 each coordinate alpha-D-mannose 1-phosphate. N218, Y230, D232, and T235 together coordinate Mg(2+). Phosphoserine is present on S242.

It belongs to the eukaryotic PMM family. In terms of assembly, homodimer. Mg(2+) is required as a cofactor. In terms of tissue distribution, present in brain, where it is restricted to neuronal cell bodies. Present at lower levels in pancreas, liver, lung, gonads, uterus, adrenal glands and pituitary (at protein level). Undetectable in intestine.

The protein localises to the cytoplasm. The enzyme catalyses alpha-D-mannose 1-phosphate = D-mannose 6-phosphate. It participates in nucleotide-sugar biosynthesis; GDP-alpha-D-mannose biosynthesis; alpha-D-mannose 1-phosphate from D-fructose 6-phosphate: step 2/2. With respect to regulation, IMP, a metabolite whose concentration is elevated in anoxia, inhibits phosphomannomutase and phosphoglucomutase activities and strongly enhances glucose-1,6-bisphosphatase activity. Involved in the synthesis of the GDP-mannose and dolichol-phosphate-mannose required for a number of critical mannosyl transfer reactions. In addition, may be responsible for the degradation of glucose-1,6-bisphosphate in ischemic brain. This Mus musculus (Mouse) protein is Phosphomannomutase 1 (Pmm1).